We begin with the raw amino-acid sequence, 790 residues long: LMBR1 domain-containing protein 2 homolog B (790 aa).

A compositionally biased stretch (low complexity) spans methionine 1–serine 21. The segment at methionine 1–isoleucine 22 is disordered. 5 helical membrane passes run phenylalanine 34–glycine 54, isoleucine 66–valine 86, phenylalanine 128–serine 148, valine 167–valine 187, and phenylalanine 195–methionine 215. The stretch at leucine 236–threonine 266 forms a coiled coil. 3 helical membrane-spanning segments follow: residues phenylalanine 401 to valine 421, proline 442 to tyrosine 462, and phenylalanine 539 to histidine 559. Disordered stretches follow at residues serine 630–serine 665, leucine 701–lysine 751, and serine 765–lysine 790. Positions isoleucine 644 to serine 665 are enriched in polar residues. Positions asparagine 706–serine 734 are enriched in low complexity. Positions isoleucine 735–proline 746 are enriched in polar residues. Acidic residues predominate over residues phenylalanine 766 to glutamate 778.

It belongs to the LIMR family.

The protein localises to the membrane. The sequence is that of LMBR1 domain-containing protein 2 homolog B from Dictyostelium discoideum (Social amoeba).